We begin with the raw amino-acid sequence, 110 residues long: NADH-quinone oxidoreductase subunit K (110 aa).

3 helical membrane-spanning segments follow: residues 7–27 (LGSY…GVFV), 31–51 (IIAI…NFIA), and 73–93 (IFVI…VIAI).

The protein belongs to the complex I subunit 4L family. As to quaternary structure, NDH-1 is composed of 14 different subunits. Subunits NuoA, H, J, K, L, M, N constitute the membrane sector of the complex.

Its subcellular location is the cell membrane. It catalyses the reaction a quinone + NADH + 5 H(+)(in) = a quinol + NAD(+) + 4 H(+)(out). Functionally, NDH-1 shuttles electrons from NADH, via FMN and iron-sulfur (Fe-S) centers, to quinones in the respiratory chain. The immediate electron acceptor for the enzyme in this species is believed to be a menaquinone. Couples the redox reaction to proton translocation (for every two electrons transferred, four hydrogen ions are translocated across the cytoplasmic membrane), and thus conserves the redox energy in a proton gradient. The polypeptide is NADH-quinone oxidoreductase subunit K (Desulfitobacterium hafniense (strain DSM 10664 / DCB-2)).